The following is a 110-amino-acid chain: Eukaryotic translation initiation factor eIF1 (110 aa).

Thr-40 is modified (phosphothreonine).

The protein belongs to the SUI1 family.

Functionally, probably involved in translation. This chain is Eukaryotic translation initiation factor eIF1, found in Drosophila melanogaster (Fruit fly).